The sequence spans 365 residues: MKEMGVIVLLLLHSFFYVAFCFNDGLLPNGDFELGPRHSDMKGTQVINITAIPNWELSGFVEYIPSGHKQGDMILVVPKGAFAVRLGNEASIKQKISVKKGSYYSITFSAARTCAQDERLNVSVAPHHAVMPIQTVYSSSGWDLYSWAFKAQSDYADIVIHNPGVEEDPACGPLIDGVAMRALFPPRPTNKNILKNGGFEEGPWVLPNISSGVLIPPNSIDDHSPLPGWMVESLKAVKYIDSDHFSVPQGRRAVELVAGKESAVAQVVRTIPGKTYVLSFSVGDASNACAGSMIVEAFAGKDTIKVPYESKGKGGFKRSSLRFVAVSSRTRVMFYSTFYAMRNDDFSSLCGPVIDDVKLLSARRP.

An N-terminal signal peptide occupies residues 1-21; the sequence is MKEMGVIVLLLLHSFFYVAFC. Asn-48, Asn-121, and Asn-208 each carry an N-linked (GlcNAc...) asparagine glycan.

Interacts with PME3. As to expression, mainly expressed in vascular tissues of roots, leaves, stamens and petals.

Its subcellular location is the secreted. It is found in the cell wall. Functionally, together with At5g11420, acts as a positive regulator of PME3 activity during several developmental processes, including reproductive organ development, hypocotyls elongation, seed germination and endosperm (testa) rupture at the micropyle, probably by modulating the pectin methylation status in cell walls. Involved in the regulation of pectin methylation degree to modulate cell wall physiology during cell separation, hypocotyl growth and embryo development. Required during embryo development, especially to regulate homogalacturonans (HG) methyl esterification in endosperm cell walls, a process related to embryo bending. Also implicated in hypocotyl growth and gravitropic response via the regulation of auxin efflux. Also regulates cell wall pectin upon root-knot nematode Meloidogyne incognita infection. The polypeptide is Protein BIIDXI (Arabidopsis thaliana (Mouse-ear cress)).